We begin with the raw amino-acid sequence, 525 residues long: GMP synthase [glutamine-hydrolyzing] (525 aa).

Positions 13 to 202 constitute a Glutamine amidotransferase type-1 domain; it reads TILVLDFGSQ…AVEICQAAQT (190 aa). The active-site Nucleophile is the C89. Active-site residues include H176 and E178. The GMPS ATP-PPase domain maps to 203 to 400; it reads WTMENFIDTE…LGISHELVWR (198 aa). 231-237 provides a ligand contact to ATP; sequence SGGVDST. XMP is bound by residues R304, D462, K517, and E523.

In terms of assembly, homodimer. Requires Mg(2+) as cofactor.

Its subcellular location is the cytoplasm. It is found in the cytosol. It catalyses the reaction XMP + L-glutamine + ATP + H2O = GMP + L-glutamate + AMP + diphosphate + 2 H(+). It participates in purine metabolism; GMP biosynthesis; GMP from XMP (L-Gln route): step 1/1. Functionally, catalyzes the conversion of xanthine monophosphate (XMP) to GMP in the presence of glutamine and ATP through an adenyl-XMP intermediate. This chain is GMP synthase [glutamine-hydrolyzing] (GUA1), found in Eremothecium gossypii (strain ATCC 10895 / CBS 109.51 / FGSC 9923 / NRRL Y-1056) (Yeast).